The primary structure comprises 230 residues: uncharacterized protein (230 aa).

The N-terminal stretch at 1 to 22 (MNIRSFLLISIFTAISYLVVDG) is a signal peptide. Residues 23–167 (ATPRTFAPSA…YTPYGGVKAL (145 aa)) are Lumenal-facing. The interval 55-90 (SSSSSSSSISTSHDSQPSTSSSSPSSTSTSSSSGTS) is disordered. Residues 168 to 188 (IGILVGVVVGSVFLLAIVMVI) form a helical membrane-spanning segment. At 189 to 230 (ARIWGPRLLANKDQNNNNEDLDSNLVSKDSEGTPQITYASNF) the chain is on the cytoplasmic side. The disordered stretch occupies residues 208-230 (DLDSNLVSKDSEGTPQITYASNF).

Its subcellular location is the endoplasmic reticulum membrane. This is an uncharacterized protein from Schizosaccharomyces pombe (strain 972 / ATCC 24843) (Fission yeast).